Consider the following 494-residue polypeptide: Cytochrome P450 2A4 (494 aa).

Phosphoserine is present on serine 131. Lysine 379 carries the post-translational modification N6-acetyllysine. Cysteine 439 provides a ligand contact to heme.

The protein belongs to the cytochrome P450 family. The cofactor is heme. As to expression, kidney and lung. Expressed in liver, with a strong circadian rhythmicity. Circadian expression is regulated by DBP.

Its subcellular location is the endoplasmic reticulum membrane. It localises to the microsome membrane. It carries out the reaction an organic molecule + reduced [NADPH--hemoprotein reductase] + O2 = an alcohol + oxidized [NADPH--hemoprotein reductase] + H2O + H(+). Its function is as follows. Highly active in the 15-alpha-hydroxylation of testosterone. Also active in the 15-alpha-hydroxylation of progesterone and androstenedione. Little or no activity on corticosterone, pregnenolone, dehydroepiandrosterone, estradiol or estriol. The polypeptide is Cytochrome P450 2A4 (Cyp2a4) (Mus musculus (Mouse)).